The following is a 187-amino-acid chain: MLIDQYLDAALLGLIEGLTEFLPVSSTGHLIIFDTLLGFEGPPGKVFEVVIQLGAILAICTVYFARLWKVVTGLKDDPGARHFAMAVILAFLPAMVLGAALHGVIKAVLFNPTVVSIALILGGVAILMAERLVPAPRYHQIERFPAPLALKIGLCQCLALVPGVSRSGATILGSLLMGVDRRTAAEF.

The next 4 helical transmembrane spans lie at 13-33 (GLIE…LIIF), 45-65 (KVFE…VYFA), 85-105 (MAVI…HGVI), and 108-128 (VLFN…AILM).

This sequence belongs to the UppP family.

Its subcellular location is the cell inner membrane. It catalyses the reaction di-trans,octa-cis-undecaprenyl diphosphate + H2O = di-trans,octa-cis-undecaprenyl phosphate + phosphate + H(+). Catalyzes the dephosphorylation of undecaprenyl diphosphate (UPP). Confers resistance to bacitracin. This is Undecaprenyl-diphosphatase (uppP) from Azospirillum brasilense.